The sequence spans 301 residues: Mitochondrial ornithine transporter 1 (301 aa).

A run of 6 helical transmembrane segments spans residues 5–25 (PAIQAAIDLTAGAAGGTACVL), 68–88 (SPALIANIAENSVLFMCYGFC), 110–130 (AAAGSFASAFAALVLCPTELV), 168–188 (GFYHGLSSTLLREVPGYFFFF), 207–227 (LGPIPLMLSGGFGGICLWLAV), and 237–257 (IQVLSMTGKQTGLIRTFLSIV). Solcar repeat units follow at residues 7 to 91 (IQAA…CQQV), 104 to 197 (LSDL…SRSF), and 207 to 293 (LGPI…SRKL).

The protein belongs to the mitochondrial carrier (TC 2.A.29) family. In terms of tissue distribution, expressed in the liver (at protein level).

The protein localises to the mitochondrion inner membrane. Its subcellular location is the mitochondrion membrane. The enzyme catalyses L-citrulline(in) + L-ornithine(out) + H(+)(in) = L-citrulline(out) + L-ornithine(in) + H(+)(out). It carries out the reaction L-ornithine(in) + L-arginine(out) = L-ornithine(out) + L-arginine(in). It catalyses the reaction L-ornithine(out) + L-lysine(in) = L-ornithine(in) + L-lysine(out). The catalysed reaction is L-ornithine(out) + H(+)(in) = L-ornithine(in) + H(+)(out). The enzyme catalyses L-lysine(out) + H(+)(in) = L-lysine(in) + H(+)(out). With respect to regulation, inhibited by pyridoxal 5'-phosphate as well as by mercurials (mersalyl, p-chloromercuribenzene sulfonate, and mercuric chloride), N-ethylmaleimide and spermine. Mitochondrial ornithine-citrulline antiporter. Catalyzes the exchange between cytosolic ornithine and mitochondrial citrulline plus an H(+), the proton compensates the positive charge of ornithine thus leading to an electroneutral transport. Plays a crucial role in the urea cycle, by connecting the cytosolic and the intramitochondrial reactions of the urea cycle. Lysine and arginine are also transported by the antiport mechanism. In addition, catalyzes an electroneutral exchange of ornithine or lysine for H(+), a reaction driven by the pH gradient across the inner membrane. The protein is Mitochondrial ornithine transporter 1 (Slc25a15) of Rattus norvegicus (Rat).